A 354-amino-acid polypeptide reads, in one-letter code: DNA integrity scanning protein DisA (354 aa).

Positions 6 to 144 (EKELKSILKL…GHIKYVLRDS (139 aa)) constitute a DAC domain. ATP-binding positions include G73, L91, and 104-108 (TRHRT).

It belongs to the DisA family. In terms of assembly, homooctamer. It depends on Mg(2+) as a cofactor.

The enzyme catalyses 2 ATP = 3',3'-c-di-AMP + 2 diphosphate. In terms of biological role, participates in a DNA-damage check-point that is active prior to asymmetric division when DNA is damaged. DisA forms globular foci that rapidly scan along the chromosomes during sporulation, searching for lesions. When a lesion is present, DisA pauses at the lesion site. This triggers a cellular response that culminates in a temporary block in sporulation initiation. Also has diadenylate cyclase activity, catalyzing the condensation of 2 ATP molecules into cyclic di-AMP (c-di-AMP). c-di-AMP acts as a signaling molecule that couples DNA integrity with progression of sporulation. The rise in c-di-AMP level generated by DisA while scanning the chromosome, operates as a positive signal that advances sporulation; upon encountering a lesion, the DisA focus arrests at the damaged site and halts c-di-AMP synthesis. The sequence is that of DNA integrity scanning protein DisA from Clostridium kluyveri (strain ATCC 8527 / DSM 555 / NBRC 12016 / NCIMB 10680 / K1).